The chain runs to 396 residues: L-lactate dehydrogenase (396 aa).

The 380-residue stretch at 1–380 (MIISAASDYR…TQDSLVQVLG (380 aa)) folds into the FMN hydroxy acid dehydrogenase domain. Residue Y24 participates in substrate binding. FMN is bound by residues S106 and Q127. Residue Y129 participates in substrate binding. Residue T155 coordinates FMN. R164 serves as a coordination point for substrate. K251 provides a ligand contact to FMN. Catalysis depends on H275, which acts as the Proton acceptor. Position 278 (R278) interacts with substrate. 306–330 (DSGIRNGLDVVRMIALGADTVLLGR) lines the FMN pocket.

The protein belongs to the FMN-dependent alpha-hydroxy acid dehydrogenase family. FMN serves as cofactor.

It is found in the cell inner membrane. The enzyme catalyses (S)-lactate + A = pyruvate + AH2. In terms of biological role, catalyzes the conversion of L-lactate to pyruvate. Is coupled to the respiratory chain. This chain is L-lactate dehydrogenase, found in Escherichia coli O45:K1 (strain S88 / ExPEC).